Consider the following 367-residue polypeptide: Tetraacyldisaccharide 4'-kinase (367 aa).

68-75 is a binding site for ATP; that stretch reads VLGGSGKT.

Belongs to the LpxK family.

The enzyme catalyses a lipid A disaccharide + ATP = a lipid IVA + ADP + H(+). The protein operates within glycolipid biosynthesis; lipid IV(A) biosynthesis; lipid IV(A) from (3R)-3-hydroxytetradecanoyl-[acyl-carrier-protein] and UDP-N-acetyl-alpha-D-glucosamine: step 6/6. Its function is as follows. Transfers the gamma-phosphate of ATP to the 4'-position of a tetraacyldisaccharide 1-phosphate intermediate (termed DS-1-P) to form tetraacyldisaccharide 1,4'-bis-phosphate (lipid IVA). This is Tetraacyldisaccharide 4'-kinase from Chlamydia caviae (strain ATCC VR-813 / DSM 19441 / 03DC25 / GPIC) (Chlamydophila caviae).